A 133-amino-acid polypeptide reads, in one-letter code: Holo-[acyl-carrier-protein] synthase (133 aa).

The Mg(2+) site is built by aspartate 8 and glutamate 64.

The protein belongs to the P-Pant transferase superfamily. AcpS family. Mg(2+) serves as cofactor.

The protein resides in the cytoplasm. The catalysed reaction is apo-[ACP] + CoA = holo-[ACP] + adenosine 3',5'-bisphosphate + H(+). Functionally, transfers the 4'-phosphopantetheine moiety from coenzyme A to a Ser of acyl-carrier-protein. In Shewanella loihica (strain ATCC BAA-1088 / PV-4), this protein is Holo-[acyl-carrier-protein] synthase.